The chain runs to 72 residues: Defensin-like protein 230 (72 aa).

The N-terminal stretch at 1–27 is a signal peptide; that stretch reads MEKKSLACLSFLLLVLFVAQEIVVSEA. 4 disulfide bridges follow: Cys30–Cys72, Cys41–Cys60, Cys45–Cys66, and Cys49–Cys68.

It belongs to the DEFL family.

It localises to the secreted. The chain is Defensin-like protein 230 (PI230) from Pisum sativum (Garden pea).